Reading from the N-terminus, the 293-residue chain is D-alanine--D-alanine ligase (293 aa).

One can recognise an ATP-grasp domain in the interval K98–N291. D124–T177 provides a ligand contact to ATP. The Mg(2+) site is built by D245, E258, and N260.

This sequence belongs to the D-alanine--D-alanine ligase family. It depends on Mg(2+) as a cofactor. The cofactor is Mn(2+).

It is found in the cytoplasm. The catalysed reaction is 2 D-alanine + ATP = D-alanyl-D-alanine + ADP + phosphate + H(+). Its pathway is cell wall biogenesis; peptidoglycan biosynthesis. In terms of biological role, cell wall formation. The chain is D-alanine--D-alanine ligase from Ruthia magnifica subsp. Calyptogena magnifica.